Consider the following 118-residue polypeptide: MDRVFIEELTVFAQIGVYDWEQQIKQKLVFDLEMAWDCKQAAETDDVVYCLNYAEVSQAIIDYVESKPFLLIERVAYEVADLLESRYQLQGLKIKLSKPKAVAQARNVGVLIVRGCLK.

Substrate contacts are provided by residues Glu-21, Tyr-53, and 72-73 (IE). Lys-98 functions as the Proton donor/acceptor in the catalytic mechanism.

The protein belongs to the DHNA family.

The catalysed reaction is 7,8-dihydroneopterin = 6-hydroxymethyl-7,8-dihydropterin + glycolaldehyde. The enzyme catalyses 7,8-dihydroneopterin = 7,8-dihydromonapterin. Its pathway is cofactor biosynthesis; tetrahydrofolate biosynthesis; 2-amino-4-hydroxy-6-hydroxymethyl-7,8-dihydropteridine diphosphate from 7,8-dihydroneopterin triphosphate: step 3/4. Its function is as follows. Catalyzes the conversion of 7,8-dihydroneopterin to 6-hydroxymethyl-7,8-dihydropterin. Can use L-threo-dihydroneopterin and D-erythro-dihydroneopterin as substrates for the formation of 6-hydroxymethyldihydropterin, but it can also catalyze the epimerization of carbon 2' of dihydroneopterin to dihydromonapterin. In Haemophilus influenzae (strain ATCC 51907 / DSM 11121 / KW20 / Rd), this protein is Dihydroneopterin aldolase (folB).